The primary structure comprises 94 residues: Co-chaperonin GroES (94 aa).

This sequence belongs to the GroES chaperonin family. As to quaternary structure, heptamer of 7 subunits arranged in a ring. Interacts with the chaperonin GroEL.

The protein localises to the cytoplasm. Together with the chaperonin GroEL, plays an essential role in assisting protein folding. The GroEL-GroES system forms a nano-cage that allows encapsulation of the non-native substrate proteins and provides a physical environment optimized to promote and accelerate protein folding. GroES binds to the apical surface of the GroEL ring, thereby capping the opening of the GroEL channel. The protein is Co-chaperonin GroES of Halalkalibacterium halodurans (strain ATCC BAA-125 / DSM 18197 / FERM 7344 / JCM 9153 / C-125) (Bacillus halodurans).